A 575-amino-acid chain; its full sequence is Acetylcholine receptor subunit beta-type acr-2 (575 aa).

An N-terminal signal peptide occupies residues 1–20 (MKKTVKILLILITVFLKVHC). Over 21–270 (NGGHDDEAAD…IRRKTLFYTV (250 aa)) the chain is Extracellular. The interval 31-57 (FLSHTNIDDPNNSSDPNKNSDQGDTMG) is disordered. Residues 38 to 50 (DDPNNSSDPNKNS) show a composition bias toward low complexity. N-linked (GlcNAc...) asparagine glycosylation is found at Asn41, Asn42, Asn80, and Asn131. Residues Cys185 and Cys199 are joined by a disulfide bond. The next 3 membrane-spanning stretches (helical) occupy residues 271–291 (ILIIPTVLMAFLSVMAFYLPV), 299–319 (LTISLLLALVVFLLLVSKILP), and 331–351 (LLLAFVLNITAVVGTVVIVNI). Over 352-527 (YFRSALSHKM…WKYVAMVLDR (176 aa)) the chain is Cytoplasmic. A helical transmembrane segment spans residues 528-548 (LILLIFFGVTLGGTLGIICSA).

The protein belongs to the ligand-gated ion channel (TC 1.A.9) family. Acetylcholine receptor (TC 1.A.9.1) subfamily. In terms of assembly, component of nicotinic acetylcholine receptor. In cholinergic motoneurons, composed of 2 non-alpha subunits acr-2 and acr-3, and 3 alpha subunits unc-38, unc-63 and acr-12. As to expression, specifically expressed in cholinergic ventral cord motoneurons of the VA, VB, DA and DB classes but not AS and VC classes. Expressed in PVQ and DVC neurons in the tail.

The protein localises to the postsynaptic cell membrane. Its subcellular location is the cell membrane. In terms of biological role, non-alpha subunit of nicotinic acetylcholine receptor (nAChR). Acts in cholinergic motoneurons to regulate presynaptic neurotransmitter release, thereby ensuring normal level of excitation of cholinergic motoneurons during locomotion. This Caenorhabditis elegans protein is Acetylcholine receptor subunit beta-type acr-2 (acr-2).